Reading from the N-terminus, the 294-residue chain is uncharacterized protein (294 aa).

The signal sequence occupies residues 1–18 (MKKLLLIITVFFTCSAVA).

This is an uncharacterized protein from Rickettsia bellii (strain RML369-C).